We begin with the raw amino-acid sequence, 273 residues long: 3-methyl-2-oxobutanoate hydroxymethyltransferase (273 aa).

Asp-53 and Asp-92 together coordinate Mg(2+). 3-methyl-2-oxobutanoate is bound by residues 53 to 54, Asp-92, and Lys-122; that span reads DS. Glu-124 provides a ligand contact to Mg(2+). Glu-191 acts as the Proton acceptor in catalysis.

Belongs to the PanB family. In terms of assembly, homodecamer; pentamer of dimers. The cofactor is Mg(2+).

The protein resides in the cytoplasm. The enzyme catalyses 3-methyl-2-oxobutanoate + (6R)-5,10-methylene-5,6,7,8-tetrahydrofolate + H2O = 2-dehydropantoate + (6S)-5,6,7,8-tetrahydrofolate. Its pathway is cofactor biosynthesis; (R)-pantothenate biosynthesis; (R)-pantoate from 3-methyl-2-oxobutanoate: step 1/2. Functionally, catalyzes the reversible reaction in which hydroxymethyl group from 5,10-methylenetetrahydrofolate is transferred onto alpha-ketoisovalerate to form ketopantoate. This Parabacteroides distasonis (strain ATCC 8503 / DSM 20701 / CIP 104284 / JCM 5825 / NCTC 11152) protein is 3-methyl-2-oxobutanoate hydroxymethyltransferase.